A 1365-amino-acid polypeptide reads, in one-letter code: Histone-lysine N-methyltransferase NSD2 (1365 aa).

Threonine 110 and threonine 114 each carry phosphothreonine. Serine 121 is modified (phosphoserine). The disordered stretch occupies residues 149 to 169 (ADVSQSEENEQKSDNKTRRNR). Serine 172 is modified (phosphoserine). The PWWP 1 domain maps to 222–286 (VGDLVWSKVS…FEKSLVAFEG (65 aa)). 3 disordered regions span residues 373–455 (MVDS…RKGD), 513–567 (QSEE…DKTA), and 594–658 (CKPL…SKKS). The residue at position 376 (serine 376) is a Phosphoserine. Threonine 422 carries the post-translational modification Phosphothreonine. Residues 453-521 (KGDSAAQFLV…AQSEEDSGNG (69 aa)) constitute a DNA-binding region (HMG box). The segment covering 552–567 (DKHSLRKRETITDKTA) has biased composition (basic and acidic residues). Residues 603 to 623 (ASATASSALGFNKSSSPSASL) are compositionally biased toward polar residues. The segment covering 632-648 (PGDEPSESPYESADETQ) has biased composition (acidic residues). PHD-type zinc fingers lie at residues 667-713 (EYVC…CASG), 714-770 (IHSC…CHAS), and 831-875 (VSWC…CRAG). Residues 880-942 (FQDIIWVKLG…QARVFPYMEG (63 aa)) form the PWWP 2 domain. The AWS domain occupies 1011–1061 (SEIPKCNCKPTDENPCGSDSECLNRMLMFECHPQVCPAGEYCQNQCFTKRQ). The Zn(2+) site is built by cysteine 1016, cysteine 1018, cysteine 1026, cysteine 1032, cysteine 1041, cysteine 1046, and cysteine 1052. The SET domain maps to 1063–1180 (PETKIIKTDG…AGTELTFNYN (118 aa)). S-adenosyl-L-methionine is bound by residues tryptophan 1075, 1115–1118 (THFY), and 1141–1142 (NH). Position 1144 (cysteine 1144) interacts with Zn(2+). Asparagine 1186 is an S-adenosyl-L-methionine binding site. One can recognise a Post-SET domain in the interval 1187 to 1203 (EKTVCRCGASNCSGFLG). Cysteine 1191 contacts Zn(2+). An S-adenosyl-L-methionine-binding site is contributed by arginine 1192. Residues cysteine 1193 and cysteine 1198 each coordinate Zn(2+). Residues 1206–1232 (PKTSASLSSEEKGKKAKKKTRRRRAKG) are disordered. Residues 1219–1230 (KKAKKKTRRRRA) are compositionally biased toward basic residues. The PHD-type 4; atypical zinc-finger motif lies at 1239-1286 (EDECFRCGDGGQLVLCDRKFCTKAYHLSCLGLGKRPFGKWECPWHHCD). Positions 1329 to 1365 (RADSSSSTKTEKPFPESLKSKGKRKKRRCWRRVTDGK) are disordered. The segment covering 1348-1359 (SKGKRKKRRCWR) has biased composition (basic residues).

It belongs to the class V-like SAM-binding methyltransferase superfamily. Histone-lysine methyltransferase family. SET2 subfamily. As to quaternary structure, interacts with HDAC1. Interacts (via PHD-type zinc fingers 1, 2 and 3) with SALL1. Interacts (via PHD-type 1, 2 and 3) with SALL4. Interacts with NANOG. Interacts with OGT. Interacts (via HMG box) with NKX2-5. As to expression, during B-cell development, expressed in early B2 cell progenitors (pre- and pro-B cells) with a decrease in expression at later stages.

Its subcellular location is the nucleus. The protein localises to the chromosome. It catalyses the reaction L-lysyl(36)-[histone H3] + S-adenosyl-L-methionine = N(6)-methyl-L-lysyl(36)-[histone H3] + S-adenosyl-L-homocysteine + H(+). It carries out the reaction L-lysyl(36)-[histone H3] + 2 S-adenosyl-L-methionine = N(6),N(6)-dimethyl-L-lysyl(36)-[histone H3] + 2 S-adenosyl-L-homocysteine + 2 H(+). Functionally, histone methyltransferase which specifically dimethylates nucleosomal histone H3 at 'Lys-36' (H3K36me2). Also monomethylates nucleosomal histone H3 at 'Lys-36' (H3K36me) in vitro. Does not trimethylate nucleosomal histone H3 at 'Lys-36' (H3K36me3). However, specifically trimethylates histone H3 at 'Lys-36' (H3K36me3) at euchromatic regions in embryonic stem (ES) cells. By methylating histone H3 at 'Lys-36', involved in the regulation of gene transcription during various biological processes. In ES cells, associates with developmental transcription factors such as SALL1 and represses inappropriate gene transcription mediated by histone deacetylation. During heart development, associates with transcription factor NKX2-5 to repress transcription of NKX2-5 target genes. Plays an essential role in adipogenesis, by regulating expression of genes involved in pre-adipocyte differentiation. During T-cell receptor (TCR) and CD28-mediated T-cell activation, promotes the transcription of transcription factor BCL6 which is required for follicular helper T (Tfh) cell differentiation. During B-cell development, required for the generation of the B1 lineage. During B2 cell activation, may contribute to the control of isotype class switch recombination (CRS), splenic germinal center formation, and the humoral immune response. Plays a role in class switch recombination of the immunoglobulin heavy chain (IgH) locus during B-cell activation. By regulating the methylation of histone H3 at 'Lys-36' and histone H4 at 'Lys-20' at the IgH locus, involved in TP53BP1 recruitment to the IgH switch region and promotes the transcription of IgA. Its function is as follows. Histone methyltransferase which specifically dimethylates nucleosomal histone H3 at 'Lys-36' (H3K36me2). Mono-, di- and tri-methylates histone H3 at 'Lys-27' (H3K27me, H3K27me2, H3K27me3). Methylation of histone H3 at 'Lys-27' is controversial. May act as a transcription regulator that binds DNA and suppresses IL5 transcription through HDAC recruitment. This is Histone-lysine N-methyltransferase NSD2 (Nsd2) from Mus musculus (Mouse).